We begin with the raw amino-acid sequence, 751 residues long: MESIPNQLPAGRDSSCSPNSKDLQSYSGPPLKPNQVSETSLYGIPIVSLVIDGQERLCLAQISNTLLKNYSYNEIHNRRVALGITCVQCTPVQLEILRRAGAMPISSRRCGMITKREAERLCKSFLGAHSPPKLPENFAFDVSHECAWGSRGNFIPARYNSSRAKCIKCSFCNMYFSPNKFIFHSHRTPESKYTQPDAANFNSWRRHLKLSDKNSSDDVIHAWEDVKAMFNGGSRKRTLPIGRSESSPSQPPRGQTQGEPSDVPHKTLRCEDDRVNVTMPSSIRSYPVIPVPSKSFGMLQKIPPPLFPHPYGFPAFGLCQKKDDGEVMGEPNKTNLSGVFWPSPKDSAYTSFPMFWPTTGSLAMPTYHHAQPKPPSDVLCARHNELDVSEQSDRSTSTPKDSLLDNERCSSTQSTRNEEDKSGDESRSIEGIPPTSRKISYISAFRPVVKDVESIAKLYGNRGPYSGPRSGYMSPDFLSESSSYRSVSPDVDSVDDPDVDVESHKAHEDEECLQLSVDDRRSPHSLTLAQSEGVKGQDQENTQMHTLNDLHSTNSSETRPSDMESHGNKHTTRFEVYARERDEHVHQMSTSYFGSATTYQRETSVKDVHEEEPSSTVEEMEPKNHQDENNISEERLKEPNDVCADEEAICKDTGNRGSLIEKNIESMAKEELQKQLVEQVELRKKLEREFQNLKDSFQDQMKRELSYREEMVQQLQIVREAHDALHHFSCKMLTPRHCTGTCTFKPPLLPP.

5 disordered regions span residues 1–30 (MESIPNQLPAGRDSSCSPNSKDLQSYSGPP), 234–267 (SRKRTLPIGRSESSPSQPPRGQTQGEPSDVPHKT), 386–434 (LDVS…GIPP), 459–569 (YGNR…HGNK), and 600–635 (QRETSVKDVHEEEPSSTVEEMEPKNHQDENNISEER). Composition is skewed to polar residues over residues 14-27 (SSCSPNSKDLQSYS) and 244-259 (SESSPSQPPRGQTQGE). Positions 416–428 (RNEEDKSGDESRS) are enriched in basic and acidic residues. Low complexity predominate over residues 479–491 (SESSSYRSVSPDV). The span at 539–558 (QENTQMHTLNDLHSTNSSET) shows a compositional bias: polar residues. Basic and acidic residues-rich tracts occupy residues 559–569 (RPSDMESHGNK), 603–612 (TSVKDVHEEE), and 620–635 (MEPKNHQDENNISEER). Residues 666 to 704 (SMAKEELQKQLVEQVELRKKLEREFQNLKDSFQDQMKRE) are a coiled coil.

The protein belongs to the SKI family.

Its subcellular location is the nucleus. In terms of biological role, may inhibit BMP signaling. The protein is SKI family transcriptional corepressor 1 homolog-B (skor1b) of Danio rerio (Zebrafish).